The following is a 421-amino-acid chain: ATP-dependent RNA helicase RhlB (421 aa).

The Q motif motif lies at 9 to 37 (QKFSDFALHPQVVEALEKKGFYNCTPIQA). The 180-residue stretch at 40–219 (LPLTLAGRDV…FEQMNNAEYV (180 aa)) folds into the Helicase ATP-binding domain. 53 to 60 (AQTGTGKT) serves as a coordination point for ATP. The DEAD box signature appears at 165-168 (DEAD). A Helicase C-terminal domain is found at 245-390 (RLLQTLIEEE…VSKYNPEALM (146 aa)). The segment at 396 to 421 (PLRLTRSRPGNGPRRAGAPRNRRRSG) is disordered. Over residues 402–414 (SRPGNGPRRAGAP) the composition is skewed to low complexity.

It belongs to the DEAD box helicase family. RhlB subfamily. Component of the RNA degradosome, which is a multiprotein complex involved in RNA processing and mRNA degradation.

It localises to the cytoplasm. It carries out the reaction ATP + H2O = ADP + phosphate + H(+). Functionally, DEAD-box RNA helicase involved in RNA degradation. Has RNA-dependent ATPase activity and unwinds double-stranded RNA. The chain is ATP-dependent RNA helicase RhlB from Salmonella agona (strain SL483).